Here is a 295-residue protein sequence, read N- to C-terminus: tRNA-cytidine(32) 2-sulfurtransferase (295 aa).

A PP-loop motif motif is present at residues 59–64 (SGGKDS). The [4Fe-4S] cluster site is built by cysteine 134, cysteine 137, and cysteine 225.

Belongs to the TtcA family. Homodimer. Mg(2+) is required as a cofactor. [4Fe-4S] cluster serves as cofactor.

It is found in the cytoplasm. The catalysed reaction is cytidine(32) in tRNA + S-sulfanyl-L-cysteinyl-[cysteine desulfurase] + AH2 + ATP = 2-thiocytidine(32) in tRNA + L-cysteinyl-[cysteine desulfurase] + A + AMP + diphosphate + H(+). It functions in the pathway tRNA modification. In terms of biological role, catalyzes the ATP-dependent 2-thiolation of cytidine in position 32 of tRNA, to form 2-thiocytidine (s(2)C32). The sulfur atoms are provided by the cysteine/cysteine desulfurase (IscS) system. The chain is tRNA-cytidine(32) 2-sulfurtransferase from Ruegeria sp. (strain TM1040) (Silicibacter sp.).